A 283-amino-acid chain; its full sequence is Protein MGARP (283 aa).

A disordered region spans residues Met1–Arg36. Residues Met1–Thr41 lie on the Cytoplasmic side of the membrane. A helical; Anchor for type IV membrane protein transmembrane segment spans residues Ser42–Tyr64. Topologically, residues Lys65–Gly283 are mitochondrial intermembrane. Disordered stretches follow at residues Val78–Ala101 and Ala118–Gly283. Residues Glu128–Glu160 are compositionally biased toward low complexity. 2 stretches are compositionally biased toward polar residues: residues Val171–Val184 and Ala199–Ala220. The segment covering Asp221 to Ser245 has biased composition (basic and acidic residues).

In terms of assembly, interacts with RHOT1/Miro-1, RHOT2/Miro-2, TRAK1/OIP106 and TRAK2/GRIF1. Expressed in the ovary, testis, brain, adrenal glands and the compartments of the visual nervous system. Expressed in corneal endothelium (CE) (at protein level). Expressed in steroidogenic tissues with the highest level of expression observed in the adrenal gland. Weakly expressed in placenta. Weakly expressed in astrocytes and neurons under normoxia. Strongly expressed in astrocytes and neurons under hypoxia. Expressed in each layer of the retina, with particularly higher staining in the inner segment of the photoreceptor (IS), the outer plexiform layer (OPL) and the ganglion cell layer (GCL).

Its subcellular location is the mitochondrion. It localises to the mitochondrion outer membrane. The protein localises to the mitochondrion inner membrane. Functionally, plays a role in the trafficking of mitochondria along microtubules. Regulates the kinesin-mediated axonal transport of mitochondria to nerve terminals along microtubules during hypoxia. Participates in the translocation of TRAK2/GRIF1 from the cytoplasm to the mitochondrion. Also plays a role in steroidogenesis through maintenance of mitochondrial abundance and morphology. Plays an inhibitory role during neocortex development by regulating mitochondrial morphology, distribution and motility in neocortical neurons. The sequence is that of Protein MGARP (Mgarp) from Mus musculus (Mouse).